The sequence spans 72 residues: Lantibiotic Flvbeta.e (72 aa).

Residues 1-34 (MNNKEFNMEQFKKLAAVVSEDELDEMLDENVTGA) constitute a propeptide, cleaved by FlvT. A cross-link (lanthionine (Ser-Cys); by FlvM2) is located at residues 36 to 40 (SSIPC). Ser-37 carries the 2,3-didehydroalanine (Ser); by FlvM2 modification. 2 positions are modified to 2,3-didehydrobutyrine; by FlvM2: Thr-48 and Thr-49. 3 cross-links (beta-methyllanthionine (Thr-Cys); by FlvM2) span residues 55–61 (TTGFDWC), 63–66 (TGAC), and 67–70 (TTSC).

In terms of processing, contains LL-lanthionine and DL-beta-methyllanthionine, when coepressed in E.coli with the flavecin synthetase FlvM2.

It is found in the secreted. Functionally, lanthionine-containing peptide antibiotic (lantibiotic) that is probably active on Gram-positive bacteria, since its analog [Del1]Flvbeta.e shows antibacterial activity against Gram-positive bacteria. This activity is not synergistically enhanced by [Del2]Flvalpha.a, an analog of Flvalpha.a, which is encoded by the same operon than Flvbeta.e. The bactericidal activity of lantibiotics is based on depolarization of energized bacterial cytoplasmic membranes, initiated by the formation of aqueous transmembrane pores. This is Lantibiotic Flvbeta.e from Ruminococcus flavefaciens.